The primary structure comprises 179 residues: MASQNRDPAATSVTAARKGAEPSGGAARGPVGKRLQQELMTLMMSGDKGISAFPESDNLFKWVGTIHGAAGTVYEDLRYKLSLEFPSGYPYNAPTVKFLTPCYHPNVDTQGNICLDILKDKWSALYDVRTILLSIQSLLGEPNIDSPLNTHAAELWKNPTAFKKYLQETYSKQVTSQEP.

The segment covering 1-14 (MASQNRDPAATSVT) has biased composition (polar residues). A disordered region spans residues 1–31 (MASQNRDPAATSVTAARKGAEPSGGAARGPV). At A2 the chain carries N-acetylalanine. Residue S3 is modified to Phosphoserine. One can recognise a UBC core domain in the interval 30–175 (PVGKRLQQEL…LQETYSKQVT (146 aa)). C114 serves as the catalytic Glycyl thioester intermediate.

This sequence belongs to the ubiquitin-conjugating enzyme family. As to quaternary structure, component of the APC/C complex, composed of at least 14 distinct subunits that assemble into a complex of at least 19 chains with a combined molecular mass of around 1.2 MDa. Within this complex, directly interacts with ANAPC2. In terms of processing, autoubiquitinated by the APC/C complex, leading to its degradation by the proteasome. Its degradation plays a central role in APC/C regulation, allowing cyclin-A accumulation before S phase entry. APC/C substrates inhibit the autoubiquitination of UBE2C/UBCH10 but not its E2 function, hence APC/C remaining active until its substrates have been destroyed.

The catalysed reaction is S-ubiquitinyl-[E1 ubiquitin-activating enzyme]-L-cysteine + [E2 ubiquitin-conjugating enzyme]-L-cysteine = [E1 ubiquitin-activating enzyme]-L-cysteine + S-ubiquitinyl-[E2 ubiquitin-conjugating enzyme]-L-cysteine.. It carries out the reaction S-ubiquitinyl-[E1 ubiquitin-activating enzyme]-L-cysteine + [acceptor protein]-L-lysine = [E1 ubiquitin-activating enzyme]-L-cysteine + N(6)-monoubiquitinyl-[acceptor protein]-L-lysine.. Its pathway is protein modification; protein ubiquitination. Functionally, accepts ubiquitin from the E1 complex and catalyzes its covalent attachment to other proteins. In vitro catalyzes 'Lys-11'- and 'Lys-48'-linked polyubiquitination. Acts as an essential factor of the anaphase promoting complex/cyclosome (APC/C), a cell cycle-regulated ubiquitin ligase that controls progression through mitosis. Acts by initiating 'Lys-11'-linked polyubiquitin chains on APC/C substrates, leading to the degradation of APC/C substrates by the proteasome and promoting mitotic exit. The polypeptide is Ubiquitin-conjugating enzyme E2 C (UBE2C) (Macaca fascicularis (Crab-eating macaque)).